The following is a 256-amino-acid chain: uncharacterized protein (256 aa).

The first 22 residues, 1-22 (MGYLKRIGMCISLLIVIIFVTS), serve as a signal peptide directing secretion. The N-palmitoyl cysteine moiety is linked to residue Cys23. Cys23 carries the S-diacylglycerol cysteine lipid modification.

Belongs to the staphylococcal tandem lipoprotein family.

It is found in the cell membrane. This is an uncharacterized protein from Staphylococcus aureus (strain MRSA252).